An 885-amino-acid chain; its full sequence is Alanine--tRNA ligase (885 aa).

Zn(2+) contacts are provided by His563, His567, Cys677, and His681. A disordered region spans residues 848–868 (LGGKGGGGRPDRAQGGAPSLA).

It belongs to the class-II aminoacyl-tRNA synthetase family. It depends on Zn(2+) as a cofactor.

The protein resides in the cytoplasm. It catalyses the reaction tRNA(Ala) + L-alanine + ATP = L-alanyl-tRNA(Ala) + AMP + diphosphate. Functionally, catalyzes the attachment of alanine to tRNA(Ala) in a two-step reaction: alanine is first activated by ATP to form Ala-AMP and then transferred to the acceptor end of tRNA(Ala). Also edits incorrectly charged Ser-tRNA(Ala) and Gly-tRNA(Ala) via its editing domain. In Paracoccus denitrificans (strain Pd 1222), this protein is Alanine--tRNA ligase.